Consider the following 131-residue polypeptide: Leptin receptor gene-related protein (131 aa).

4 helical membrane-spanning segments follow: residues 7–27, 32–52, 69–89, and 100–120; these read LVAL…GCAL, VYWP…YFIA, LAYF…VVLA, and GLVL…FLVF.

It belongs to the OB-RGRP/VPS55 family. Interacts with LEPR. Interacts with RAB13. Widely distributed in the brain, with elevated expression in the hypothalamic regions, including the paraventricular nucleus. In the placenta, present at high levels in the junctional zone situated towards the maternal aspect and throughout the labyrinth zone in close proximity to the developing fetus.

The protein resides in the golgi apparatus membrane. Its subcellular location is the endosome membrane. Functionally, negatively regulates leptin receptor (LEPR) cell surface expression, and thus decreases response to leptin. Negatively regulates growth hormone (GH) receptor cell surface expression in liver. May play a role in liver resistance to GH during periods of reduced nutrient availability. The chain is Leptin receptor gene-related protein (Leprot) from Mus musculus (Mouse).